The following is a 75-amino-acid chain: Putative membrane protein insertion efficiency factor (75 aa).

It belongs to the UPF0161 family.

It localises to the cell membrane. Functionally, could be involved in insertion of integral membrane proteins into the membrane. This chain is Putative membrane protein insertion efficiency factor, found in Bacillus cytotoxicus (strain DSM 22905 / CIP 110041 / 391-98 / NVH 391-98).